The chain runs to 191 residues: MINITEAAQTHFAKLLANQEPGTQIRVFVINPGTPTAECGVSYCPPDAVEATDTELKFDQLSAYVDELSAPFLEEAEIDFVTDQLGSQLTLKAPNAKMRKVSDDSPLAERVEYVLQSQINPQLAGHGGRVSLMEITDDGFAILQFGGGCNGCSMVDVTLKEGIEKELLNMFPELKGVKDLTEHQRGEHSYY.

2 residues coordinate [4Fe-4S] cluster: Cys149 and Cys152.

This sequence belongs to the NfuA family. In terms of assembly, homodimer. [4Fe-4S] cluster is required as a cofactor.

Functionally, involved in iron-sulfur cluster biogenesis. Binds a 4Fe-4S cluster, can transfer this cluster to apoproteins, and thereby intervenes in the maturation of Fe/S proteins. Could also act as a scaffold/chaperone for damaged Fe/S proteins. The chain is Fe/S biogenesis protein NfuA from Photorhabdus laumondii subsp. laumondii (strain DSM 15139 / CIP 105565 / TT01) (Photorhabdus luminescens subsp. laumondii).